The sequence spans 343 residues: MPLDGVKNIVLVLSGKGGVGKSSVTLQLALTFCLQGRSVGILDVDLTGPSIPRLVGLEDAKITQAPGGWLPVTVHPFHTPSSDGLNGSQRANKPDDSNESSSSTVETAPQSTNFCGSLRCMSLGFLLRDRGDAVIWRGPKKTAMIRQFLTDVLWGETDYLLIDTPPGTSDEHIALAEQLLTIQQTYSLRSSRATAPKLAGAVLVTTPQAISTSDVRKEINFCVKTRIPVLGVIENMSGYTCPCCGEVSNVFSRGGGQIMAQETGVRFLGAVPIDVGFGEMVEGWKKDSTGQDQGNKATKKGQDARLDSYDDLLVERYKKCWSFSVFEEFAKKLIGLIEGSDQQ.

15–22 (GKGGVGKS) contributes to the ATP binding site. Polar residues-rich tracts occupy residues 80–91 (PSSDGLNGSQRA) and 99–110 (ESSSSTVETAPQ). Residues 80 to 110 (PSSDGLNGSQRANKPDDSNESSSSTVETAPQ) form a disordered region. Positions 241 and 244 each coordinate [4Fe-4S] cluster.

It belongs to the Mrp/NBP35 ATP-binding proteins family. NUBP2/CFD1 subfamily. As to quaternary structure, heterotetramer of 2 NBP35 and 2 CFD1 chains. It depends on [4Fe-4S] cluster as a cofactor.

It localises to the cytoplasm. Functionally, component of the cytosolic iron-sulfur (Fe/S) protein assembly (CIA) machinery. Required for maturation of extramitochondrial Fe-S proteins. The NBP35-CFD1 heterotetramer forms a Fe-S scaffold complex, mediating the de novo assembly of an Fe-S cluster and its transfer to target apoproteins. This chain is Cytosolic Fe-S cluster assembly factor CFD1, found in Coccidioides immitis (strain RS) (Valley fever fungus).